The following is a 198-amino-acid chain: Protoplast secreted protein 2 (198 aa).

Positions 1–21 are cleaved as a signal peptide; it reads MPRVAIIIYTLYGHVAATAEA. In terms of domain architecture, Flavodoxin-like spans 22 to 191; it reads EKKGIEAAGG…QVHEIQGKTF (170 aa).

It belongs to the WrbA family.

It is found in the secreted. The chain is Protoplast secreted protein 2 (PST2) from Saccharomyces cerevisiae (strain ATCC 204508 / S288c) (Baker's yeast).